Here is a 428-residue protein sequence, read N- to C-terminus: C4-dicarboxylate transport protein (428 aa).

Helical transmembrane passes span 8 to 28 (VLYVQVIFAIVVGVILGHYYP), 44 to 64 (LIKMVIGPIIFCTVVTGIAGM), 78 to 98 (LLYFEIVSTCALVLGLAATHI), 148 to 168 (GEILQILLIALLFGSVLAHLG), 184 to 204 (VLFGIVHIVTKLAPIGAFGAM), 222 to 242 (LIGTFYLTSVVFVLVVLGAIA), 307 to 327 (IYMTMAVLFIAQATNIELTWM), and 355 to 375 (AATLAVVPTIPLSGMVLILGI).

The protein belongs to the dicarboxylate/amino acid:cation symporter (DAACS) (TC 2.A.23) family.

It localises to the cell inner membrane. Its function is as follows. Responsible for the transport of dicarboxylates such as succinate, fumarate, and malate from the periplasm across the membrane. This Burkholderia mallei (strain ATCC 23344) protein is C4-dicarboxylate transport protein.